A 315-amino-acid chain; its full sequence is Protein FRA10AC1 (315 aa).

The residue at position 1 (methionine 1) is an N-acetylmethionine. A disordered region spans residues 1-28; it reads MHGHGGYDSDFSDDERCGESSKRKKRTV. Residues serine 9 and serine 12 each carry the phosphoserine modification. N6-acetyllysine is present on lysine 36. A compositionally biased stretch (basic residues) spans 226-235; that stretch reads EIKSKKRKDK. The interval 226 to 315 is disordered; it reads EIKSKKRKDK…FDEYFQDLFL (90 aa). Over residues 236–245 the composition is skewed to basic and acidic residues; it reads TKKDCEESSH. A phosphoserine mark is found at serine 251, serine 252, serine 278, serine 283, and serine 285. Positions 268-278 are enriched in basic and acidic residues; it reads KKSEDSLLRNS. Positions 301-315 are enriched in acidic residues; the sequence is SQEEEFDEYFQDLFL.

Interacts with ESS2. Ubiquitously expressed with higher expression in brain, heart, skeletal muscle, kidney and liver.

It is found in the nucleus. Its function is as follows. May be involved in pre-mRNA splicing. The polypeptide is Protein FRA10AC1 (FRA10AC1) (Homo sapiens (Human)).